The primary structure comprises 1232 residues: Dynactin subunit 1 (1232 aa).

The 43-residue stretch at 31 to 73 (GATLFATGKWVGVILDDSKGKNDGTVQGRRYFTCEENHGIFVR) folds into the CAP-Gly domain. Disordered regions lie at residues 82–183 (DGAD…AQVK) and 339–358 (SASE…KKNT). Residues 86–95 (TTSPETPEPT) show a composition bias toward low complexity. The segment covering 108–117 (PKSSKLPTRP) has biased composition (polar residues). The segment covering 118-130 (SSSAASSGTASAS) has biased composition (low complexity). Positions 133–144 (EISSSEPSTPAQ) are enriched in polar residues. Residues 146–163 (PLAAPIIPSPSSAITSPV) are compositionally biased toward low complexity. 4 coiled-coil regions span residues 170 to 505 (GPSK…KEQQ), 908 to 1005 (ETVI…RTIE), 1046 to 1071 (LLLQ…LKAH), and 1136 to 1166 (AAQL…ETVS). Over residues 172-183 (SKEEENLRAQVK) the composition is skewed to basic and acidic residues.

This sequence belongs to the dynactin 150 kDa subunit family. Monomer and homodimer. Subunit of dynactin, a multiprotein complex part of a tripartite complex with dynein and a adapter, such as BICDL1, BICD2 or HOOK3. The dynactin complex is built around ACTR1A/ACTB filament and consists of an actin-related filament composed of a shoulder domain, a pointed end and a barbed end. Its length is defined by its flexible shoulder domain. The soulder is composed of 2 DCTN1 subunits, 4 DCTN2 and 2 DCTN3. DCTN1/p150(glued) binds directly to microtubules and to cytoplasmic dynein.

The protein resides in the cytoplasm. Its subcellular location is the cytoskeleton. It is found in the microtubule organizing center. The protein localises to the centrosome. It localises to the centriole. The protein resides in the spindle. Its subcellular location is the cell cortex. Its function is as follows. Part of the dynactin complex that activates the molecular motor dynein for ultra-processive transport along microtubules. Plays a key role in dynein-mediated retrograde transport of vesicles and organelles along microtubules by recruiting and tethering dynein to microtubules. Binds to both dynein and microtubules providing a link between specific cargos, microtubules and dynein. Essential for targeting dynein to microtubule plus ends, recruiting dynein to membranous cargos and enhancing dynein processivity (the ability to move along a microtubule for a long distance without falling off the track). Can also act as a brake to slow the dynein motor during motility along the microtubule. Can regulate microtubule stability by promoting microtubule formation, nucleation and polymerization and by inhibiting microtubule catastrophe in neurons. Inhibits microtubule catastrophe by binding both to microtubules and to tubulin, leading to enhanced microtubule stability along the axon. Plays a role in metaphase spindle orientation. Plays a role in centriole cohesion and subdistal appendage organization and function. Its recruitment to the centriole in a KIF3A-dependent manner is essential for the maintenance of centriole cohesion and the formation of subdistal appendage. Also required for microtubule anchoring at the mother centriole. Plays a role in primary cilia formation. The polypeptide is Dynactin subunit 1 (dctn1) (Xenopus laevis (African clawed frog)).